The primary structure comprises 514 residues: Acetylcholine receptor subunit gamma (514 aa).

An N-terminal signal peptide occupies residues 1-22 (MRCSDLLLLFLLALCVLPGISC). The Extracellular portion of the chain corresponds to 23–241 (RNQEEKLLQD…VIFYLIIQRK (219 aa)). A disulfide bond links Cys-150 and Cys-164. Asn-163 carries an N-linked (GlcNAc...) asparagine glycan. 3 consecutive transmembrane segments (helical) span residues 242 to 266 (PLFY…VYFL), 275 to 293 (CTVS…FLIA), and 309 to 330 (YLTF…VLNV). Residues 331–473 (SLRTPNTHSM…WILVGRVIDR (143 aa)) are Cytoplasmic-facing. Position 386 is a phosphotyrosine; by Tyr-kinases (Tyr-386). Residues 474-494 (VCFFIMASLFVCGTIGIFLMA) traverse the membrane as a helical segment.

The protein belongs to the ligand-gated ion channel (TC 1.A.9) family. Acetylcholine receptor (TC 1.A.9.1) subfamily. Gamma/CHRNG sub-subfamily. In terms of assembly, pentamer of two alpha chains, and one each of the beta, delta, and gamma chains.

The protein resides in the postsynaptic cell membrane. Its subcellular location is the cell membrane. The enzyme catalyses K(+)(in) = K(+)(out). The catalysed reaction is Na(+)(in) = Na(+)(out). Its function is as follows. After binding acetylcholine, the AChR responds by an extensive change in conformation that affects all subunits and leads to opening of an ion-conducting channel across the plasma membrane. In Gallus gallus (Chicken), this protein is Acetylcholine receptor subunit gamma (CHRNG).